A 423-amino-acid polypeptide reads, in one-letter code: Serine hydroxymethyltransferase (423 aa).

Gly-121 to Ile-123 is a binding site for (6S)-5,6,7,8-tetrahydrofolate. Lys-227 carries the post-translational modification N6-(pyridoxal phosphate)lysine. Glu-242 provides a ligand contact to (6S)-5,6,7,8-tetrahydrofolate.

Belongs to the SHMT family. Homodimer. It depends on pyridoxal 5'-phosphate as a cofactor.

The protein resides in the cytoplasm. The catalysed reaction is 5,10-methylenetetrahydromethanopterin + glycine + H2O = 5,6,7,8-tetrahydromethanopterin + L-serine. It functions in the pathway amino-acid biosynthesis; glycine biosynthesis; glycine from L-serine: step 1/1. Its function is as follows. Catalyzes the reversible interconversion of serine and glycine with tetrahydromethanopterin (H4MPT) serving as the one-carbon carrier. Also exhibits a pteridine-independent aldolase activity toward beta-hydroxyamino acids, producing glycine and aldehydes, via a retro-aldol mechanism. The sequence is that of Serine hydroxymethyltransferase from Methanothermobacter marburgensis (strain ATCC BAA-927 / DSM 2133 / JCM 14651 / NBRC 100331 / OCM 82 / Marburg) (Methanobacterium thermoautotrophicum).